The sequence spans 902 residues: Cytosolic 10-formyltetrahydrofolate dehydrogenase (902 aa).

The interval 1-310 (MKIAVIGQSL…PASQYYKTAD (310 aa)) is hydrolase domain. 88–90 (QFI) provides a ligand contact to (6R)-10-formyltetrahydrofolate. Histidine 106 acts as the Proton donor in catalysis. A (6R)-10-formyltetrahydrofolate-binding site is contributed by aspartate 142. One can recognise a Carrier domain in the interval 318–395 (DEEKKFSEEI…EFIQMVVRRL (78 aa)). At serine 354 the chain carries O-(pantetheine 4'-phosphoryl)serine. Residues 417 to 902 (TVKIPHQLFI…LKTKAVTIEY (486 aa)) form an aldehyde dehydrogenase domain region. Residues 571-573 (IPW), 597-600 (KPAQ), 630-635 (GSLIGQ), 650-651 (GS), and 673-674 (EL) contribute to the NADP(+) site. Glutamate 673 serves as the catalytic Proton acceptor. Cysteine 707 (proton donor) is an active-site residue. Residues lysine 757 and 804–806 (ESF) each bind NADP(+).

It in the N-terminal section; belongs to the GART family. In the C-terminal section; belongs to the aldehyde dehydrogenase family. ALDH1L subfamily. In terms of assembly, homotetramer. Post-translationally, phosphopantetheinylation at Ser-354 by AASDHPPT is required for the formyltetrahydrofolate dehydrogenase activity.

The protein localises to the cytoplasm. Its subcellular location is the cytosol. The catalysed reaction is (6R)-10-formyltetrahydrofolate + NADP(+) + H2O = (6S)-5,6,7,8-tetrahydrofolate + CO2 + NADPH + H(+). Functionally, cytosolic 10-formyltetrahydrofolate dehydrogenase that catalyzes the NADP(+)-dependent conversion of 10-formyltetrahydrofolate to tetrahydrofolate and carbon dioxide. May also have an NADP(+)-dependent aldehyde dehydrogenase activity towards formaldehyde, acetaldehyde, propionaldehyde, and benzaldehyde. Regulates reduced folate pools as well as glycine metabolism. The sequence is that of Cytosolic 10-formyltetrahydrofolate dehydrogenase (aldh1l1) from Xenopus tropicalis (Western clawed frog).